Consider the following 181-residue polypeptide: TATA-box-binding protein (181 aa).

A run of 2 repeats spans residues 8–84 (IENI…VDLM) and 99–175 (IQNI…YDRL).

This sequence belongs to the TBP family.

Functionally, general factor that plays a role in the activation of archaeal genes transcribed by RNA polymerase. Binds specifically to the TATA box promoter element which lies close to the position of transcription initiation. The chain is TATA-box-binding protein from Methanobrevibacter smithii (strain ATCC 35061 / DSM 861 / OCM 144 / PS).